The sequence spans 200 residues: NADH-quinone oxidoreductase subunit C (200 aa).

It belongs to the complex I 30 kDa subunit family. NDH-1 is composed of 14 different subunits. Subunits NuoB, C, D, E, F, and G constitute the peripheral sector of the complex.

The protein localises to the cell inner membrane. The catalysed reaction is a quinone + NADH + 5 H(+)(in) = a quinol + NAD(+) + 4 H(+)(out). Functionally, NDH-1 shuttles electrons from NADH, via FMN and iron-sulfur (Fe-S) centers, to quinones in the respiratory chain. The immediate electron acceptor for the enzyme in this species is believed to be ubiquinone. Couples the redox reaction to proton translocation (for every two electrons transferred, four hydrogen ions are translocated across the cytoplasmic membrane), and thus conserves the redox energy in a proton gradient. This is NADH-quinone oxidoreductase subunit C from Burkholderia vietnamiensis (strain G4 / LMG 22486) (Burkholderia cepacia (strain R1808)).